A 302-amino-acid chain; its full sequence is uncharacterized protein (302 aa).

Transmembrane regions (helical) follow at residues 10–30 (VLSVLVLVLLGYILKVLGVLG), 65–85 (LVLIPVICMITGTLSGTIAYL), 102–122 (VAAAMMNSGFLGYPVTAGIFG), 130–150 (IFYDTGTTLMFTSLGLLLSHI), 162–182 (AVFFPPLWAFLLGVIFNLWGL), 190–210 (ILGYLSGAAVPLIMISLGLTL), 224–244 (LVSGLRLLISPLMAAGISYVL), 251–271 (FSVTVLEASMPSAMLAAVLAI), and 282–302 (SCIFMSTILSLVSLPLWSVVL).

This sequence belongs to the auxin efflux carrier (TC 2.A.69) family.

It is found in the cell membrane. This is an uncharacterized protein from Methanothermobacter thermautotrophicus (strain ATCC 29096 / DSM 1053 / JCM 10044 / NBRC 100330 / Delta H) (Methanobacterium thermoautotrophicum).